Consider the following 82-residue polypeptide: uncharacterized protein (82 aa).

Over residues D55–S64 the composition is skewed to polar residues. Residues D55 to N82 form a disordered region.

This is an uncharacterized protein from Dictyostelium discoideum (Social amoeba).